The sequence spans 383 residues: MKIDFASSRQSTLGVEWELALVNAQTGELASVANEVLRGVSANHPELNEDDEHPHIKQELLLNTVELVTGICETVAQAKADLSSSLAAVREVTDPMGVEVFCAGSHPFSPPQLQPVTDKARYAKLIDRTQWWGRQMVIYGVHVHVGLDSRDKVLPVLDGLVNYFPHFQALSASSPFWGGEDTGYASQRALMFQQLPTAGLPFQFSTWAEYESYVQDMFTTGVIDTISEIRWDIRPVPNLGTIEMRICDGLATLEEVGAIAALTQCLVDEFSTILDNGGTIPTMPPWHVQENKWRAARYGLEAIIILDAEGNEQLVTDHLLETLNRLEPVAAKLGCSDELADVEKIISRGAGYQRQRRVAAEHGGDLRAVVLDLVKQMRNGPTA.

It belongs to the glutamate--cysteine ligase type 2 family. YbdK subfamily.

The catalysed reaction is L-cysteine + L-glutamate + ATP = gamma-L-glutamyl-L-cysteine + ADP + phosphate + H(+). Its function is as follows. ATP-dependent carboxylate-amine ligase which exhibits weak glutamate--cysteine ligase activity. This Arthrobacter sp. (strain FB24) protein is Putative glutamate--cysteine ligase 2-1.